Consider the following 502-residue polypeptide: Cytochrome P450 81D1 (502 aa).

A helical transmembrane segment spans residues 6–26 (IRVVLYSIFSLIFLIISFKFL). Residue C440 participates in heme binding.

Belongs to the cytochrome P450 family. Heme serves as cofactor.

The protein localises to the membrane. The sequence is that of Cytochrome P450 81D1 (CYP81D1) from Arabidopsis thaliana (Mouse-ear cress).